A 970-amino-acid chain; its full sequence is Rho GTPase-activating protein gacK (970 aa).

Positions 1–20 are cleaved as a signal peptide; sequence MTLVYEKSSFVLIMAQIAEA. Disordered regions lie at residues 30–49, 258–285, 312–446, 487–550, and 860–886; these read SNDL…SAAI, STCS…INQN, EITI…FSPT, STSN…NNNN, and TASS…NDDP. Composition is skewed to low complexity over residues 35-49 and 258-269; these read STSA…SAAI and STCSLSSNASNN. Residues 321-333 show a composition bias toward pro residues; it reads IPLPPQSSSPPPT. The segment covering 334–383 has biased composition (low complexity); that stretch reads RNNQSSPSPSSPQQQNIMPTPPSTSLTPPQSPTLSPSSSTHSTPTQTTTT. Positions 392 to 406 are enriched in polar residues; the sequence is PSTISQNNARKTQIP. Residues 407–426 show a composition bias toward low complexity; the sequence is TTTTTTTTTTTTTSTTSTTS. The segment covering 427-446 has biased composition (polar residues); it reads PNPVVNNKNLNTPSSSFSPT. A Rho-GAP domain is found at 754 to 970; that stretch reads IEDSELVEDN…LELIQFNKSL (217 aa). Low complexity predominate over residues 860-885; that stretch reads TASSAATANSSSSGSGNGNSSPNNDD.

It localises to the cytoplasm. Rho GTPase-activating protein involved in the signal transduction pathway. This is Rho GTPase-activating protein gacK (gacK) from Dictyostelium discoideum (Social amoeba).